Consider the following 132-residue polypeptide: Histone H2B.9 (132 aa).

Positions 1–11 are enriched in basic and acidic residues; that stretch reads MAPKAEKKPAE. The interval 1–41 is disordered; sequence MAPKAEKKPAEKAPAPKAEKKIAKEGGTSEIVKKKKKTKKS. A N,N,N-trimethylalanine; alternate modification is found at Ala2. Ala2 carries the n,N-dimethylalanine; alternate modification. Ala2 bears the N-methylalanine; alternate mark. An N6-methyllysine modification is found at Lys4. N6-acetyllysine is present on residues Lys7, Lys12, Lys20, and Lys21. Residue Lys128 forms a Glycyl lysine isopeptide (Lys-Gly) (interchain with G-Cter in ubiquitin) linkage.

This sequence belongs to the histone H2B family. In terms of assembly, the nucleosome is a histone octamer containing two molecules each of H2A, H2B, H3 and H4 assembled in one H3-H4 heterotetramer and two H2A-H2B heterodimers. The octamer wraps approximately 147 bp of DNA. Can be acetylated to form H2BK6ac, H2BK33ac and H2BK34ac. In terms of processing, monoubiquitinated by BRE1 to form H2BK143ub1 and deubiquitinated by UBP26. Required for heterochromatic histone H3 di- and trimethylation at H3K4me. May give a specific tag for epigenetic transcriptional activation.

Its subcellular location is the nucleus. It localises to the chromosome. Its function is as follows. Core component of nucleosome. Nucleosomes wrap and compact DNA into chromatin, limiting DNA accessibility to the cellular machineries which require DNA as a template. Histones thereby play a central role in transcription regulation, DNA repair, DNA replication and chromosomal stability. DNA accessibility is regulated via a complex set of post-translational modifications of histones, also called histone code, and nucleosome remodeling. This is Histone H2B.9 from Arabidopsis thaliana (Mouse-ear cress).